The chain runs to 185 residues: Lysozyme g (185 aa).

2 disulfides stabilise this stretch: cysteine 4-cysteine 60 and cysteine 18-cysteine 29. The active site involves glutamate 73.

This sequence belongs to the glycosyl hydrolase 23 family.

It is found in the secreted. It carries out the reaction Hydrolysis of (1-&gt;4)-beta-linkages between N-acetylmuramic acid and N-acetyl-D-glucosamine residues in a peptidoglycan and between N-acetyl-D-glucosamine residues in chitodextrins.. The sequence is that of Lysozyme g from Cygnus atratus (Black swan).